The primary structure comprises 1174 residues: MDRQPKVYSDPDNGFFFLDVPMPDDGQGGQQTATTAAGGAFGVGGGHSVPYVRIMNGVSGIQIGNHNAMSIASCWSPSYTDRRRRSYPKTATNAAADRVAAAVSAANAAVNAAAAAAAAGGGGGANLLAAAVTCANQRGCCGGNGGHSLPPTRMPKTNATAAAAPAVAGASNAKSDNNHANATSGAGSAAATPAATTPAATAVENRRPSPSPSTASTAPCDEGSSPRHHRPSHVSVGTQATPSTPIPIPAPRCSTGQQQQQPQAKKLKPAKADPLLYAATMPPPASVTTAAAAAVAPESESSPAASAPPAAAAMATGGDDEDQSSFSFVSDDVLGEFEDLRIAGLPVRDEMRPPTPTMTVIPVSRPFRAGRDSGRDALFDDAVESVRCYCHGILGNSRFCALVNEKCSEPAKERMARIRRYAADVTRCGPLALYTAIVSSANRLIQTDPSCDLDLAECYVETASKRNAVPLSAFYRDCDRLRDAVAAFFKTYGMVVDAMAQRITERVGPALGRGLYSTVVMMDRCGNSFQGREETPISVFARVAAALAVECEVDGGVSYKILSSKPVDAAQAFDAFLSALCSFAIIPSPRVLAYAGFGGSNPIFDAVSYRAQFYSAESTINGTLHDICDMVTNGLSVSVSAADLGGDIVASLHILGQQCKALRPYARFKTVLRIYFDIWSVDALKIFSFILDVGREYEGLMAFAVNTPRIFWDRYLDSSGDKMWLMFARREAAALCGLDLKSFRNVYEKMERDGRSAITVSPWWAVCQLDACVARGNTAVVFPHNVKSMIPENIGRPAVCGPGVSVVSGGFVGCTPIHELCINLENCVLEGAAVESSVDVVLGLGCRFSFKALESLVRDAVVLGNLLIDMTVRTNAYGAGKLLTLYRDLHIGVVGFHAVMNRLGQKFADMESYDLNQRIAEFIYYTAVRASVDLCMAGADPFPKFPKSLYAAGRFYPDLFDDDERGPRRMTKEFLEKLREDVVKHGIRNASFITGCSADEAANLAGTTPGFWPRRDNVFLEQTPLMMTPTKDQMLDECVRSVKIEPHRLHEEDLSCLGENRPVELPVLNSRLRQISKESATVAVRRGRSAPFYDDSDDEDEVACSETGWTVSTDAVIKMCVDRQPFVDHAQSLPVAIGFGGSSVELARHLRRGNALGLSVGVYKCSMPPSVNYR.

The RIP homotypic interaction motif (RHIM) motif lies at 50 to 72; it reads PYVRIMNGVSGIQIGNHNAMSIA. Disordered stretches follow at residues 170–269 and 291–325; these read ASNA…KLKP and AAAAVAPESESSPAASAPPAAAAMATGGDDEDQSS. 3 stretches are compositionally biased toward low complexity: residues 182–202, 233–243, and 291–316; these read ATSGAGSAAATPAATTPAATA, HVSVGTQATPS, and AAAAVAPESESSPAASAPPAAAAMAT.

The protein belongs to the ribonucleoside diphosphate reductase large chain family. Self-assembles into homo-oligomeric amyloid fibrils. Interacts with host RIPK1 (via RIP homotypic interaction motif); this interaction inhibits RIPK1 ubiquitination thereby preventing effective activation of host NF-kappa-B. Interacts with host RIPK3 (via RIP homotypic interaction motif); this interaction disrupts RIPK3-RIPK1 interactions characteristic of TNF-alpha induced necroptosis, thereby suppressing this death pathway. Interacts (via RIP homotypic interaction motif) with host ZBP1 (via RIP homotypic interaction motif); this interaction inhibits recruitment of RIPK1 and RIPK3 to ZBP1 and prevents ZBP1-induced NF-kappa-B activation. In terms of processing, undergoes proteolytic cleavage, generating two peptides, a N-terminal and a 116 kDa. The N-terminal peptide retains RIPK1- and RIPK3-binding activity as well as cell death suppression activity.

It is found in the virion. The protein localises to the host cytoplasm. In terms of biological role, provides optimal viral replication conditions by promoting host cell survival and avoiding the host inflammatory response linked to NF-kappa-B activation. Blocks RIPK1 ubiquitination, thereby preventing NF-kappa-B activation and virally induced inflammatory response. Prevents host necroptosis by targeting RIPK3 thereby preventing the formation of necroptotic RIPK1-RIPK3 complexes. Also inhibits ZBP1-induced necroptosis. Does not have ribonucleotide reductase activity. Betaherpesviruses probably use another strategy to expand the dNTP pool in a quiescent host cell. The polypeptide is Ribonucleoside-diphosphate reductase large subunit-like protein (Murid herpesvirus 1 (strain Smith) (MuHV-1)).